The primary structure comprises 428 residues: Serine--tRNA ligase (428 aa).

231 to 233 is a binding site for L-serine; that stretch reads TAE. 262-264 is an ATP binding site; sequence RSE. Position 285 (glutamate 285) interacts with L-serine. ATP is bound at residue 349–352; the sequence is EISS. L-serine is bound at residue serine 385.

This sequence belongs to the class-II aminoacyl-tRNA synthetase family. Type-1 seryl-tRNA synthetase subfamily. Homodimer. The tRNA molecule binds across the dimer.

It is found in the cytoplasm. It carries out the reaction tRNA(Ser) + L-serine + ATP = L-seryl-tRNA(Ser) + AMP + diphosphate + H(+). It catalyses the reaction tRNA(Sec) + L-serine + ATP = L-seryl-tRNA(Sec) + AMP + diphosphate + H(+). It functions in the pathway aminoacyl-tRNA biosynthesis; selenocysteinyl-tRNA(Sec) biosynthesis; L-seryl-tRNA(Sec) from L-serine and tRNA(Sec): step 1/1. Functionally, catalyzes the attachment of serine to tRNA(Ser). Is also able to aminoacylate tRNA(Sec) with serine, to form the misacylated tRNA L-seryl-tRNA(Sec), which will be further converted into selenocysteinyl-tRNA(Sec). The sequence is that of Serine--tRNA ligase from Staphylococcus aureus (strain MRSA252).